The chain runs to 163 residues: GTP-dependent dephospho-CoA kinase (163 aa).

The GTP site is built by Asp38, Val39, Asp57, Glu115, and Asp138.

Belongs to the GTP-dependent DPCK family.

It catalyses the reaction 3'-dephospho-CoA + GTP = GDP + CoA + H(+). It functions in the pathway cofactor biosynthesis; coenzyme A biosynthesis. Functionally, catalyzes the GTP-dependent phosphorylation of the 3'-hydroxyl group of dephosphocoenzyme A to form coenzyme A (CoA). This is GTP-dependent dephospho-CoA kinase from Methanothermobacter thermautotrophicus (strain ATCC 29096 / DSM 1053 / JCM 10044 / NBRC 100330 / Delta H) (Methanobacterium thermoautotrophicum).